We begin with the raw amino-acid sequence, 224 residues long: Ribonuclease T (224 aa).

The Exonuclease domain maps to 20–195; the sequence is VVIDVETAGF…YDTQKTAELF (176 aa). Mg(2+) is bound by residues aspartate 23, glutamate 25, histidine 182, and aspartate 187. Histidine 182 serves as the catalytic Proton donor/acceptor.

The protein belongs to the RNase T family. Homodimer. Requires Mg(2+) as cofactor.

Functionally, trims short 3' overhangs of a variety of RNA species, leaving a one or two nucleotide 3' overhang. Responsible for the end-turnover of tRNA: specifically removes the terminal AMP residue from uncharged tRNA (tRNA-C-C-A). Also appears to be involved in tRNA biosynthesis. This Vibrio cholerae serotype O1 (strain ATCC 39315 / El Tor Inaba N16961) protein is Ribonuclease T.